The following is a 471-amino-acid chain: MDYLPLFADIRQRPVLVVGGGEVAARKVALLKKAGAIIKIVAKNIHPELQILQENHEIEWLAKSFSPEQLDHVFLVIAATNDSLLNQQIYQAAEQRHRLVNVVDDQQKCSFIFPSIVDRAPITLALSSAGTSPVLVRMLREKLEALLPQSLGKMAEIAGKWRPRIKEKLPAIKDRRLFWEKAFNGLFAHKVASGDWESAEKTLAEQLEKDNPKQGEIILVGAGPGDAGLLTLRGLQALQQADIVLYDYLVSPAVLEMIRRDAQKICVGKRAGHHSVAQEETNRRLIEWAQQGKKVVRLKGGDPFIFGRGGEELQAAKQASIPFQVVPGITAASGAAAYAGIPLTHRDYSQNVVFITGHCQKDGNGLDWATLARPHQTLVIYMGVMNAGKISEALIKHGRKADTPVAIIAHATLPNQQILNGRLDQLESLAKQAETPALLIIGEVGGLQSDLSWFSSKTDKEDTKSSLINLA.

The precorrin-2 dehydrogenase /sirohydrochlorin ferrochelatase stretch occupies residues 1–203 (MDYLPLFADI…GDWESAEKTL (203 aa)). Residues 22–23 (EV) and 43–44 (KN) each bind NAD(+). Ser128 carries the post-translational modification Phosphoserine. Residues 215-471 (GEIILVGAGP…DTKSSLINLA (257 aa)) form a uroporphyrinogen-III C-methyltransferase region. An S-adenosyl-L-methionine-binding site is contributed by Pro224. Asp247 (proton acceptor) is an active-site residue. Catalysis depends on Lys269, which acts as the Proton donor. S-adenosyl-L-methionine contacts are provided by residues 300-302 (GGD), Ile305, 330-331 (TA), Met382, and Ala411.

This sequence in the N-terminal section; belongs to the precorrin-2 dehydrogenase / sirohydrochlorin ferrochelatase family. In the C-terminal section; belongs to the precorrin methyltransferase family.

It catalyses the reaction uroporphyrinogen III + 2 S-adenosyl-L-methionine = precorrin-2 + 2 S-adenosyl-L-homocysteine + H(+). The catalysed reaction is precorrin-2 + NAD(+) = sirohydrochlorin + NADH + 2 H(+). It carries out the reaction siroheme + 2 H(+) = sirohydrochlorin + Fe(2+). Its pathway is cofactor biosynthesis; adenosylcobalamin biosynthesis; precorrin-2 from uroporphyrinogen III: step 1/1. It functions in the pathway cofactor biosynthesis; adenosylcobalamin biosynthesis; sirohydrochlorin from precorrin-2: step 1/1. It participates in porphyrin-containing compound metabolism; siroheme biosynthesis; precorrin-2 from uroporphyrinogen III: step 1/1. The protein operates within porphyrin-containing compound metabolism; siroheme biosynthesis; siroheme from sirohydrochlorin: step 1/1. Its pathway is porphyrin-containing compound metabolism; siroheme biosynthesis; sirohydrochlorin from precorrin-2: step 1/1. Its function is as follows. Multifunctional enzyme that catalyzes the SAM-dependent methylations of uroporphyrinogen III at position C-2 and C-7 to form precorrin-2 via precorrin-1. Then it catalyzes the NAD-dependent ring dehydrogenation of precorrin-2 to yield sirohydrochlorin. Finally, it catalyzes the ferrochelation of sirohydrochlorin to yield siroheme. The chain is Siroheme synthase from Zymomonas mobilis subsp. mobilis (strain ATCC 31821 / ZM4 / CP4).